The sequence spans 674 residues: Protein asunder (674 aa).

Residues 516-538 (HKAKDQYRLLYRELEQLIQLNAS) adopt a coiled-coil conformation. The short motif at 601–607 (LKASKRR) is the Nuclear localization signal (NLS) element.

The protein belongs to the Integrator subunit 13 family. As to quaternary structure, belongs to the multiprotein complex Integrator, at least composed of IntS1, IntS2, IntS3, IntS4, omd/IntS5, IntS6, defl/IntS7, IntS8, IntS9, IntS10, IntS11, IntS12, asun/IntS13, IntS14 and IntS15. The core complex associates with protein phosphatase 2A subunits mts/PP2A and Pp2A-29B, to form the Integrator-PP2A (INTAC) complex. Phosphorylated.

The protein resides in the nucleus. Its subcellular location is the cytoplasm. The protein localises to the perinuclear region. In terms of biological role, component of the integrator complex, a multiprotein complex that terminates RNA polymerase II (Pol II) transcription in the promoter-proximal region of genes. The integrator complex provides a quality checkpoint during transcription elongation by driving premature transcription termination of transcripts that are unfavorably configured for transcriptional elongation: the complex terminates transcription by (1) catalyzing dephosphorylation of the C-terminal domain (CTD) of Pol II subunit Polr2A/Rbp1 and Spt5, and (2) degrading the exiting nascent RNA transcript via endonuclease activity. The integrator complex is also involved in the 3'-end processing of the U7 snRNA, and also the spliceosomal snRNAs U1, U2, U4 and U5. The polypeptide is Protein asunder (asun) (Drosophila persimilis (Fruit fly)).